The following is an 81-amino-acid chain: Small ribosomal subunit protein uS17 (81 aa).

It belongs to the universal ribosomal protein uS17 family. As to quaternary structure, part of the 30S ribosomal subunit.

In terms of biological role, one of the primary rRNA binding proteins, it binds specifically to the 5'-end of 16S ribosomal RNA. This is Small ribosomal subunit protein uS17 from Protochlamydia amoebophila (strain UWE25).